Consider the following 464-residue polypeptide: Argininosuccinate lyase 2 (464 aa).

Belongs to the lyase 1 family. Argininosuccinate lyase subfamily.

The protein localises to the cytoplasm. The catalysed reaction is 2-(N(omega)-L-arginino)succinate = fumarate + L-arginine. It participates in amino-acid biosynthesis; L-arginine biosynthesis; L-arginine from L-ornithine and carbamoyl phosphate: step 3/3. This is Argininosuccinate lyase 2 from Pseudomonas fluorescens (strain Pf0-1).